A 174-amino-acid chain; its full sequence is Peptide methionine sulfoxide reductase MsrA (174 aa).

Cys-10 is an active-site residue.

This sequence belongs to the MsrA Met sulfoxide reductase family.

It carries out the reaction L-methionyl-[protein] + [thioredoxin]-disulfide + H2O = L-methionyl-(S)-S-oxide-[protein] + [thioredoxin]-dithiol. The enzyme catalyses [thioredoxin]-disulfide + L-methionine + H2O = L-methionine (S)-S-oxide + [thioredoxin]-dithiol. Functionally, has an important function as a repair enzyme for proteins that have been inactivated by oxidation. Catalyzes the reversible oxidation-reduction of methionine sulfoxide in proteins to methionine. This Paenarthrobacter aurescens (strain TC1) protein is Peptide methionine sulfoxide reductase MsrA.